Here is a 380-residue protein sequence, read N- to C-terminus: Lipid-A-disaccharide synthase (380 aa).

The protein belongs to the LpxB family.

It carries out the reaction a lipid X + a UDP-2-N,3-O-bis[(3R)-3-hydroxyacyl]-alpha-D-glucosamine = a lipid A disaccharide + UDP + H(+). The protein operates within bacterial outer membrane biogenesis; LPS lipid A biosynthesis. In terms of biological role, condensation of UDP-2,3-diacylglucosamine and 2,3-diacylglucosamine-1-phosphate to form lipid A disaccharide, a precursor of lipid A, a phosphorylated glycolipid that anchors the lipopolysaccharide to the outer membrane of the cell. The polypeptide is Lipid-A-disaccharide synthase (Francisella philomiragia subsp. philomiragia (strain ATCC 25017 / CCUG 19701 / FSC 153 / O#319-036)).